Consider the following 401-residue polypeptide: Nicotinate phosphoribosyltransferase (401 aa).

At H221 the chain carries Phosphohistidine; by autocatalysis.

It belongs to the NAPRTase family. Post-translationally, transiently phosphorylated on a His residue during the reaction cycle. Phosphorylation strongly increases the affinity for substrates and increases the rate of nicotinate D-ribonucleotide production. Dephosphorylation regenerates the low-affinity form of the enzyme, leading to product release.

The enzyme catalyses nicotinate + 5-phospho-alpha-D-ribose 1-diphosphate + ATP + H2O = nicotinate beta-D-ribonucleotide + ADP + phosphate + diphosphate. It participates in cofactor biosynthesis; NAD(+) biosynthesis; nicotinate D-ribonucleotide from nicotinate: step 1/1. Functionally, catalyzes the synthesis of beta-nicotinate D-ribonucleotide from nicotinate and 5-phospho-D-ribose 1-phosphate at the expense of ATP. In Erwinia tasmaniensis (strain DSM 17950 / CFBP 7177 / CIP 109463 / NCPPB 4357 / Et1/99), this protein is Nicotinate phosphoribosyltransferase.